The sequence spans 485 residues: MTARLDPFVPAASPQAVPTPELTAPSSDAAAKREARRLAHEALLVRAKAIDEAGGADDWVQAQLVSKGLAVEDLDFSSASEKDKKAWKEKKKAEATERRALKRQAHEAWKATHVGHLGAGVHWAEDRLADAFDVPHREERARANGLTELDSAEALAKALGLSVSKLRWFAFHREVDTATHYVSWTIPKRDGSKRTITSPKPELKAAQRWVLSNVVERLPVHGAAHGFVAGRSILTNALAHQGADVVVKVDLKDFFPSVTWRRVKGLLRKGGLREGTSTLLSLLSTEAPREAVQFRGKLLHVAKGPRALPQGAPTSPGITNALCLKLDKRLSALAKRLGFTYTRYADDLTFSWTKAKQPKPRRTQRPPVAVLLSRVQEVVEAEGFRVHPDKTRVARKGTRQRVTGLVVNAAGKDAPAARVPRDVVRQLRAAIHNRKKGKPGREGESLEQLKGMAAFIHMTDPAKGRAFLAQLTELESTASAAPQAE.

Residues 1-33 (MTARLDPFVPAASPQAVPTPELTAPSSDAAAKR) form a disordered region. Residues 167-407 (RWFAFHREVD…TRQRVTGLVV (241 aa)) enclose the Reverse transcriptase domain. Mg(2+) contacts are provided by aspartate 250, aspartate 346, and aspartate 347.

It belongs to the bacterial reverse transcriptase family.

It carries out the reaction DNA(n) + a 2'-deoxyribonucleoside 5'-triphosphate = DNA(n+1) + diphosphate. With respect to regulation, msDNA synthesis is inhibited by rifampicin and chloramphenicol. Reverse transcriptase (RT) responsible for synthesis of msDNA-Mx162 (a branched molecule with RNA linked by a 2',5'-phosphodiester bond to ssDNA). The retron transcript serves as primer (from a conserved internal G residue) and template for the reaction, and codes for the RT. The retron is involved in antiviral defense. This Myxococcus xanthus protein is Retron Mx162 reverse transcriptase.